We begin with the raw amino-acid sequence, 505 residues long: Deoxyguanosinetriphosphate triphosphohydrolase (505 aa).

Residues 66–273 (RLTHSMEVQQ…MEAADDISYC (208 aa)) enclose the HD domain.

The protein belongs to the dGTPase family. Type 1 subfamily. In terms of assembly, homotetramer. It depends on Mg(2+) as a cofactor.

The catalysed reaction is dGTP + H2O = 2'-deoxyguanosine + triphosphate + H(+). Functionally, dGTPase preferentially hydrolyzes dGTP over the other canonical NTPs. The chain is Deoxyguanosinetriphosphate triphosphohydrolase from Salmonella paratyphi A (strain AKU_12601).